Reading from the N-terminus, the 68-residue chain is Riparin-1.5 amide (68 aa).

The signal sequence occupies residues 1 to 15 (MKIIVVLAVLMLVSA). A propeptide spanning residues 16–41 (QVCLVSAAEMGHSSDNELSSRDLVKR) is cleaved from the precursor. C47 and C53 form a disulfide bridge. A Cysteine amide modification is found at C53. Positions 57-68 (SIESSEGANGGE) are excised as a propeptide.

As to expression, expressed by the skin glands.

Its subcellular location is the secreted. This is Riparin-1.5 amide from Crinia riparia (Streambank froglet).